Here is a 174-residue protein sequence, read N- to C-terminus: Gamma-crystallin D (174 aa).

2 Beta/gamma crystallin 'Greek key' domains span residues 2-40 (GKIT…RVDS) and 41-83 (GCWM…RLIP). The tract at residues 84–87 (HAGS) is connecting peptide. Beta/gamma crystallin 'Greek key' domains follow at residues 88 to 128 (HRLR…NVLE) and 129 to 171 (GSWV…RRVI).

This sequence belongs to the beta/gamma-crystallin family.

Crystallins are the dominant structural components of the vertebrate eye lens. The sequence is that of Gamma-crystallin D (CRYGD) from Bos taurus (Bovine).